The chain runs to 331 residues: tRNA-dihydrouridine(20/20a) synthase (331 aa).

FMN-binding positions include 18-20 (PML) and Gln70. The active-site Proton donor is Cys100. Residues Lys139, His172, 212 to 214 (NGG), and 234 to 235 (GR) each bind FMN.

The protein belongs to the Dus family. DusA subfamily. FMN serves as cofactor.

It carries out the reaction 5,6-dihydrouridine(20) in tRNA + NADP(+) = uridine(20) in tRNA + NADPH + H(+). It catalyses the reaction 5,6-dihydrouridine(20) in tRNA + NAD(+) = uridine(20) in tRNA + NADH + H(+). The enzyme catalyses 5,6-dihydrouridine(20a) in tRNA + NADP(+) = uridine(20a) in tRNA + NADPH + H(+). The catalysed reaction is 5,6-dihydrouridine(20a) in tRNA + NAD(+) = uridine(20a) in tRNA + NADH + H(+). Catalyzes the synthesis of 5,6-dihydrouridine (D), a modified base found in the D-loop of most tRNAs, via the reduction of the C5-C6 double bond in target uridines. Specifically modifies U20 and U20a in tRNAs. The polypeptide is tRNA-dihydrouridine(20/20a) synthase (Escherichia coli O6:H1 (strain CFT073 / ATCC 700928 / UPEC)).